The sequence spans 302 residues: Acetaldehyde dehydrogenase 1 (302 aa).

12–15 contacts NAD(+); sequence SGNI. Cysteine 127 acts as the Acyl-thioester intermediate in catalysis. Residues 158-166 and asparagine 277 each bind NAD(+); that span reads SAGPGTRAN.

This sequence belongs to the acetaldehyde dehydrogenase family.

It carries out the reaction acetaldehyde + NAD(+) + CoA = acetyl-CoA + NADH + H(+). This Mycobacteroides abscessus (strain ATCC 19977 / DSM 44196 / CCUG 20993 / CIP 104536 / JCM 13569 / NCTC 13031 / TMC 1543 / L948) (Mycobacterium abscessus) protein is Acetaldehyde dehydrogenase 1.